A 496-amino-acid chain; its full sequence is MTYLLALDQGTSSSRSIVFNAQGQVVAQAQQELTQIYPQPGWVEHDPLEIWRTQLATAREVLAKAGIEAREVRALGITNQRETTVVWSRKTGAPIHNAIVWQDRRAEPTCVELRARGLTPTVQAKTGLLVDAYFSGTKLKWILDHVPGARQQAENGELAFGTVDSWLIWQLTHGTVHATDVSNASRTMLFNVHSNQWDDELLRALDIPAKLLPAIKPSSALFGEVSPDLLGAAIPIGGVAGDQQSALFGQACFKPGMVKNTYGTGCFMLMHTGHSFQSSANGLITTSAAQTTAQPEFAMEGSVFVGGAVVQWLRDGLRAIPSSSEVQALAESVPDAGGVMVVPAFTGLGAPYWKPDARGTITGLSRGSTLAHIARAALESIAFQSAALLQAMSRDAVQAGGSAVAELRVDGGACVNDLLMQFQADLLGIAVVRPAVIETTALGAAYLAGLATGVYRSTDEISTLWQAERRFLPALAPARAAELMEHWEHAVRQTVL.

Thr-11 lines the ADP pocket. ATP-binding residues include Thr-11, Ser-12, and Ser-13. Residue Thr-11 coordinates sn-glycerol 3-phosphate. Arg-15 provides a ligand contact to ADP. Arg-81, Glu-82, Tyr-133, and Asp-242 together coordinate sn-glycerol 3-phosphate. Glycerol is bound by residues Arg-81, Glu-82, Tyr-133, Asp-242, and Gln-243. 2 residues coordinate ADP: Thr-264 and Gly-307. Residues Thr-264, Gly-307, Gln-311, and Gly-412 each contribute to the ATP site. 2 residues coordinate ADP: Gly-412 and Asn-416.

It belongs to the FGGY kinase family.

The enzyme catalyses glycerol + ATP = sn-glycerol 3-phosphate + ADP + H(+). It participates in polyol metabolism; glycerol degradation via glycerol kinase pathway; sn-glycerol 3-phosphate from glycerol: step 1/1. With respect to regulation, inhibited by fructose 1,6-bisphosphate (FBP). Functionally, key enzyme in the regulation of glycerol uptake and metabolism. Catalyzes the phosphorylation of glycerol to yield sn-glycerol 3-phosphate. The polypeptide is Glycerol kinase (Albidiferax ferrireducens (strain ATCC BAA-621 / DSM 15236 / T118) (Rhodoferax ferrireducens)).